Here is a 291-residue protein sequence, read N- to C-terminus: Pituitary-specific positive transcription factor 1 (291 aa).

The 9aaTAD motif lies at 5-13 (AFTSADTFI). The POU-specific domain occupies 124–198 (MDSPEIRELE…ILSKWLEEAE (75 aa)). Residues 214 to 273 (KRKRRTTISIAAKDALERHFGEQNKPSSQEIMRMAEELNLEKEVVRVWFCNRRQREKRVK) constitute a DNA-binding region (homeobox).

This sequence belongs to the POU transcription factor family. Class-1 subfamily. In terms of assembly, interacts with PITX1. Interacts with LHX3. Interacts with ELK1.

The protein resides in the nucleus. Its function is as follows. Transcription factor involved in the specification of the lactotrope, somatotrope, and thyrotrope phenotypes in the developing anterior pituitary. Specifically binds to the consensus sequence 5'-TAAAT-3'. Activates growth hormone and prolactin genes. This is Pituitary-specific positive transcription factor 1 (POU1F1) from Homo sapiens (Human).